Consider the following 90-residue polypeptide: MEYSYPLNPDWTTEEMTIVVQFLEAIERAYEKGIDTLELKEKYRAFKQVVPAKGEEKRIGIDFEKASGYSAYKVMQLVKNATTSKIKMQP.

The protein belongs to the UPF0223 family.

This chain is UPF0223 protein lmo1058, found in Listeria monocytogenes serovar 1/2a (strain ATCC BAA-679 / EGD-e).